The primary structure comprises 299 residues: ATP phosphoribosyltransferase (299 aa).

It belongs to the ATP phosphoribosyltransferase family. Long subfamily. The cofactor is Mg(2+).

The protein resides in the cytoplasm. The enzyme catalyses 1-(5-phospho-beta-D-ribosyl)-ATP + diphosphate = 5-phospho-alpha-D-ribose 1-diphosphate + ATP. The protein operates within amino-acid biosynthesis; L-histidine biosynthesis; L-histidine from 5-phospho-alpha-D-ribose 1-diphosphate: step 1/9. Feedback inhibited by histidine. Its function is as follows. Catalyzes the condensation of ATP and 5-phosphoribose 1-diphosphate to form N'-(5'-phosphoribosyl)-ATP (PR-ATP). Has a crucial role in the pathway because the rate of histidine biosynthesis seems to be controlled primarily by regulation of HisG enzymatic activity. The polypeptide is ATP phosphoribosyltransferase (Actinobacillus pleuropneumoniae serotype 5b (strain L20)).